The sequence spans 269 residues: 4-hydroxy-tetrahydrodipicolinate reductase (269 aa).

Residues 8–13 (GAAGRM) and E34 contribute to the NAD(+) site. R35 serves as a coordination point for NADP(+). Residues 98-100 (GTT) and 122-125 (APNY) contribute to the NAD(+) site. Catalysis depends on H155, which acts as the Proton donor/acceptor. H156 lines the (S)-2,3,4,5-tetrahydrodipicolinate pocket. Catalysis depends on K159, which acts as the Proton donor. 165-166 (GT) serves as a coordination point for (S)-2,3,4,5-tetrahydrodipicolinate.

Belongs to the DapB family.

The protein localises to the cytoplasm. It carries out the reaction (S)-2,3,4,5-tetrahydrodipicolinate + NAD(+) + H2O = (2S,4S)-4-hydroxy-2,3,4,5-tetrahydrodipicolinate + NADH + H(+). It catalyses the reaction (S)-2,3,4,5-tetrahydrodipicolinate + NADP(+) + H2O = (2S,4S)-4-hydroxy-2,3,4,5-tetrahydrodipicolinate + NADPH + H(+). The protein operates within amino-acid biosynthesis; L-lysine biosynthesis via DAP pathway; (S)-tetrahydrodipicolinate from L-aspartate: step 4/4. Catalyzes the conversion of 4-hydroxy-tetrahydrodipicolinate (HTPA) to tetrahydrodipicolinate. The chain is 4-hydroxy-tetrahydrodipicolinate reductase from Vibrio vulnificus (strain YJ016).